Here is a 192-residue protein sequence, read N- to C-terminus: Protein GrpE (192 aa).

The tract at residues Met1–Gly34 is disordered. Residues Ala21–Thr31 are compositionally biased toward polar residues.

This sequence belongs to the GrpE family. In terms of assembly, homodimer.

The protein localises to the cytoplasm. Its function is as follows. Participates actively in the response to hyperosmotic and heat shock by preventing the aggregation of stress-denatured proteins, in association with DnaK and GrpE. It is the nucleotide exchange factor for DnaK and may function as a thermosensor. Unfolded proteins bind initially to DnaJ; upon interaction with the DnaJ-bound protein, DnaK hydrolyzes its bound ATP, resulting in the formation of a stable complex. GrpE releases ADP from DnaK; ATP binding to DnaK triggers the release of the substrate protein, thus completing the reaction cycle. Several rounds of ATP-dependent interactions between DnaJ, DnaK and GrpE are required for fully efficient folding. The polypeptide is Protein GrpE (Yersinia enterocolitica serotype O:8 / biotype 1B (strain NCTC 13174 / 8081)).